A 427-amino-acid polypeptide reads, in one-letter code: MILKQAILTLVLVNANLFAQEPPKTYSSTDKETRQGPPKPPMGKRWVLNPDFSDEFNGTELDTTKWLDHHPTWIGRAPGLFMSSQVSVGDGFLKMEGKKLEKDTIVHAYGKDITFNIAGAAVVSKKATKFGYYECRVKAAATTMSTTFWFSSSNNFKGPKDCDRYGLEWDIHESIGREGDFNGSYFASGMHSNAHFWYTDCNGKKYDHRAPQVKFEDAKLTSEDFNVYGGWWRDESTASYYYNNRPPKHQKFYDKVKKKPFDQPMYMRLVNETYPFPWIELPNAEELSDPSKNTVYYDWVRAYRLVDVNDPNSEVEKDPTLKLYHENVTFPSATIEHKRSKSLEIPLSYQANEDREIAFILFDNEGKKIKEAILTAYAGYANLEYTLQLDQKLPLGSPYKLSAHIRPLKGNKKNSLDESTVYIHLTK.

The first 19 residues, 1 to 19, serve as a signal peptide directing secretion; the sequence is MILKQAILTLVLVNANLFA. The interval 23–45 is disordered; that stretch reads PKTYSSTDKETRQGPPKPPMGKR. Residues 32–308 form the GH16 domain; it reads ETRQGPPKPP…WVRAYRLVDV (277 aa). Substrate-binding residues include Trp-73, Arg-76, Glu-168, Glu-173, and Glu-272. The active-site Nucleophile is Glu-168. Glu-173 acts as the Proton donor in catalysis.

It belongs to the glycosyl hydrolase 16 family.

The protein localises to the periplasm. It carries out the reaction Hydrolysis of beta-D-galactopyranose-(1-&gt;4)-alpha-L-galactopyranose-6-sulfate linkages in porphyran.. Functionally, cleaves the sulfated polysaccharide porphyran at the (1-&gt;4) linkages between beta-D-galactopyranose and alpha-L-galactopyranose-6-sulfate, forming mostly the disaccharide alpha-L-galactopyranose-6-sulfate-(1-&gt;3)-beta-D-galactose. The polypeptide is Beta-porphyranase D (porD) (Zobellia galactanivorans (strain DSM 12802 / CCUG 47099 / CIP 106680 / NCIMB 13871 / Dsij)).